The primary structure comprises 355 residues: Arginine kinase (355 aa).

In terms of domain architecture, Phosphagen kinase N-terminal spans 8-90 (KLQAGFKKLE…FDPIIEDYHV (83 aa)). Residue 63–67 (GVGIY) participates in L-arginine binding. A Phosphagen kinase C-terminal domain is found at 118-355 (YVISTRVRCG…LQLIKMEKEM (238 aa)). ATP-binding positions include 121–125 (STRVR) and His-184. Glu-224 contacts L-arginine. An ATP-binding site is contributed by Arg-228. Position 270 (Cys-270) interacts with L-arginine. Residues 279 to 283 (RASVH) and 308 to 313 (RGTRGE) each bind ATP. L-arginine is bound at residue Glu-313.

Belongs to the ATP:guanido phosphotransferase family. Monomer.

The enzyme catalyses L-arginine + ATP = N(omega)-phospho-L-arginine + ADP + H(+). The polypeptide is Arginine kinase (Penaeus japonicus (Kuruma prawn)).